A 600-amino-acid chain; its full sequence is Xylulose kinase (600 aa).

W79–A82 serves as a coordination point for substrate. S244 carries the phosphoserine modification. D299 provides a ligand contact to substrate. Residues G358 and G505 to N509 contribute to the ATP site.

The protein belongs to the FGGY kinase family.

The protein localises to the cytoplasm. The catalysed reaction is D-xylulose + ATP = D-xylulose 5-phosphate + ADP + H(+). Its function is as follows. Xylulose kinase necessary for growth in culture media with D-xylulose as the solecarbon source. The chain is Xylulose kinase from Saccharomyces cerevisiae (strain ATCC 204508 / S288c) (Baker's yeast).